We begin with the raw amino-acid sequence, 460 residues long: ATP synthase subunit beta (460 aa).

149–156 (GGAGVGKT) contributes to the ATP binding site.

This sequence belongs to the ATPase alpha/beta chains family. As to quaternary structure, F-type ATPases have 2 components, CF(1) - the catalytic core - and CF(0) - the membrane proton channel. CF(1) has five subunits: alpha(3), beta(3), gamma(1), delta(1), epsilon(1). CF(0) has three main subunits: a(1), b(2) and c(9-12). The alpha and beta chains form an alternating ring which encloses part of the gamma chain. CF(1) is attached to CF(0) by a central stalk formed by the gamma and epsilon chains, while a peripheral stalk is formed by the delta and b chains.

Its subcellular location is the cell membrane. The catalysed reaction is ATP + H2O + 4 H(+)(in) = ADP + phosphate + 5 H(+)(out). Functionally, produces ATP from ADP in the presence of a proton gradient across the membrane. The catalytic sites are hosted primarily by the beta subunits. The protein is ATP synthase subunit beta of Acholeplasma laidlawii (strain PG-8A).